A 650-amino-acid polypeptide reads, in one-letter code: Macrolide export ATP-binding/permease protein MacB (650 aa).

Residues 6 to 244 (LKLTGITRRF…ASSPEAASSP (239 aa)) form the ABC transporter domain. 42–49 (GASGSGKS) serves as a coordination point for ATP. A disordered region spans residues 227–246 (QTRPEEATASSPEAASSPAT). Residues 233–246 (ATASSPEAASSPAT) show a composition bias toward low complexity. 4 helical membrane passes run 275-295 (FLTM…VALG), 523-543 (LTLL…IGVM), 580-600 (LVCL…GVLF), and 615-635 (SIIA…FFPA).

It belongs to the ABC transporter superfamily. Macrolide exporter (TC 3.A.1.122) family. In terms of assembly, homodimer. Part of the tripartite efflux system MacAB-TolC, which is composed of an inner membrane transporter, MacB, a periplasmic membrane fusion protein, MacA, and an outer membrane component, TolC. The complex forms a large protein conduit and can translocate molecules across both the inner and outer membranes. Interacts with MacA.

It is found in the cell inner membrane. Part of the tripartite efflux system MacAB-TolC. MacB is a non-canonical ABC transporter that contains transmembrane domains (TMD), which form a pore in the inner membrane, and an ATP-binding domain (NBD), which is responsible for energy generation. Confers resistance against macrolides. The protein is Macrolide export ATP-binding/permease protein MacB of Pectobacterium atrosepticum (strain SCRI 1043 / ATCC BAA-672) (Erwinia carotovora subsp. atroseptica).